The primary structure comprises 87 residues: Beta-defensin 109C (87 aa).

The N-terminal stretch at 1–22 is a signal peptide; that stretch reads MRLHLLLLILLLFSILLSPVRG. Disulfide bonds link C31–C59, C38–C53, and C43–C60.

It belongs to the beta-defensin family.

The protein localises to the secreted. Its function is as follows. Has antibacterial activity. The chain is Beta-defensin 109C (DEFB109C) from Homo sapiens (Human).